The primary structure comprises 365 residues: GTPase Obg (365 aa).

Residues 2–160 form the Obg domain; sequence ESFVDEVAIE…KFLRLSLKLL (159 aa). In terms of domain architecture, OBG-type G spans 161 to 329; the sequence is ADVGIVGLPN…LLEAMDEAFF (169 aa). GTP contacts are provided by residues 167–174, 192–196, 215–218, 282–285, and 310–312; these read GLPNAGKS, FTTLS, DIPG, NKID, and SAD. Ser174 and Thr194 together coordinate Mg(2+).

This sequence belongs to the TRAFAC class OBG-HflX-like GTPase superfamily. OBG GTPase family. In terms of assembly, monomer. Mg(2+) is required as a cofactor.

The protein localises to the cytoplasm. Its function is as follows. An essential GTPase which binds GTP, GDP and possibly (p)ppGpp with moderate affinity, with high nucleotide exchange rates and a fairly low GTP hydrolysis rate. Plays a role in control of the cell cycle, stress response, ribosome biogenesis and in those bacteria that undergo differentiation, in morphogenesis control. This Leptospira borgpetersenii serovar Hardjo-bovis (strain JB197) protein is GTPase Obg.